The following is a 277-amino-acid chain: Phosphonoacetaldehyde hydrolase (277 aa).

The active-site Nucleophile is the Asp-20. Mg(2+) contacts are provided by Asp-20 and Ala-22. Lys-61 acts as the Schiff-base intermediate with substrate in catalysis. Asp-194 is a binding site for Mg(2+).

This sequence belongs to the HAD-like hydrolase superfamily. PhnX family. In terms of assembly, homodimer. Mg(2+) is required as a cofactor.

The enzyme catalyses phosphonoacetaldehyde + H2O = acetaldehyde + phosphate + H(+). Its function is as follows. Involved in phosphonate degradation. The sequence is that of Phosphonoacetaldehyde hydrolase from Syntrophobacter fumaroxidans (strain DSM 10017 / MPOB).